The sequence spans 859 residues: Active breakpoint cluster region-related protein (859 aa).

Residues 31 to 84 (AEGHEEQKGPPEGSETMPYIDESPTMSPQLSARSQGGGESISPTPPEGLAPGVE) are disordered. Residues 54–64 (PTMSPQLSARS) are compositionally biased toward polar residues. A Phosphoserine modification is found at Ser-57. Residues 91–284 (MRKLVLSGFL…QNFLSSINED (194 aa)) form the DH domain. Positions 301-459 (QLVKDGFLVE…WREAIQKLQK (159 aa)) constitute a PH domain. The C2 domain occupies 484–613 (TVHNIPVTSN…ESKNWHTDVI (130 aa)). In terms of domain architecture, Rho-GAP spans 647 to 845 (VKISVVTKRE…YYLQHPPISF (199 aa)).

In terms of assembly, interacts with DLG4. In terms of tissue distribution, expressed in brain, including the cortex, hippocampus, cerebellum, and brainstem, as well as the spinal cord (at protein level).

It is found in the cell projection. It localises to the dendritic spine. The protein localises to the axon. Its subcellular location is the synapse. Functionally, protein with a unique structure having two opposing regulatory activities toward small GTP-binding proteins. The C-terminus is a GTPase-activating protein domain which stimulates GTP hydrolysis by RAC1, RAC2 and CDC42. Accelerates the intrinsic rate of GTP hydrolysis of RAC1 or CDC42, leading to down-regulation of the active GTP-bound form. The central Dbl homology (DH) domain functions as guanine nucleotide exchange factor (GEF) that modulates the GTPases CDC42, RHOA and RAC1. Promotes the conversion of CDC42, RHOA and RAC1 from the GDP-bound to the GTP-bound form. Functions as an important negative regulator of neuronal RAC1 activity. Regulates macrophage functions such as CSF-1 directed motility and phagocytosis through the modulation of RAC1 activity. This chain is Active breakpoint cluster region-related protein, found in Rattus norvegicus (Rat).